A 274-amino-acid chain; its full sequence is Cytochrome b-c1 complex subunit Rieske, mitochondrial (274 aa).

At 79 to 103 the chain is on the mitochondrial matrix side; the sequence is SHTDVKVPDFCDYRRPEVLDSTKSS. The helical transmembrane segment at 104–140 threads the bilayer; that stretch reads RESSEARKSFSYMVTAVTTVGVAYAAKNAVTQFVSSM. The Mitochondrial intermembrane portion of the chain corresponds to 141 to 274; that stretch reads SASADVLAMA…FTSDDMVVVG (134 aa). The region spanning 187 to 272 is the Rieske domain; that stretch reads EAAVELSQLR…YEFTSDDMVV (86 aa). [2Fe-2S] cluster-binding residues include Cys-217, His-219, Cys-236, His-239, and Ser-241. Cys-222 and Cys-238 are oxidised to a cystine.

Belongs to the Rieske iron-sulfur protein family. As to quaternary structure, component of the ubiquinol-cytochrome c oxidoreductase (cytochrome b-c1 complex, complex III, CIII), a multisubunit enzyme composed of 11 subunits. The complex is composed of 3 respiratory subunits cytochrome b, cytochrome c1 and Rieske protein UQCRFS1, 2 core protein subunits UQCRC1/QCR1 and UQCRC2/QCR2, and 6 low-molecular weight protein subunits UQCRH/QCR6, UQCRB/QCR7, UQCRQ/QCR8, UQCR10/QCR9, UQCR11/QCR10 and subunit 9, the cleavage product of Rieske protein UQCRFS1. The complex exists as an obligatory dimer and forms supercomplexes (SCs) in the inner mitochondrial membrane with NADH-ubiquinone oxidoreductase (complex I, CI) and cytochrome c oxidase (complex IV, CIV), resulting in different assemblies (supercomplex SCI(1)III(2)IV(1) and megacomplex MCI(2)III(2)IV(2)). Incorporation of the Rieske protein UQCRFS1 is the penultimate step in complex III assembly. Interacts with TTC19, which is involved in the clearance of UQCRFS1 fragments. In terms of assembly, component of the ubiquinol-cytochrome c oxidoreductase (cytochrome b-c1 complex, complex III, CIII). Subunit 9 corresponds to the mitochondrial targeting sequence (MTS) of Rieske protein UQCRFS1. It is retained after processing and incorporated inside complex III, where it remains bound to the complex and localizes between the 2 core subunits UQCRC1/QCR1 and UQCRC2/QCR2. [2Fe-2S] cluster is required as a cofactor. Proteolytic processing is necessary for the correct insertion of UQCRFS1 in the complex III dimer. Several fragments are generated during UQCRFS1 insertion, most probably due to the endogenous matrix-processing peptidase (MPP) activity of the 2 core protein subunits UQCRC1/QCR1 and UQCRC2/QCR2, which are homologous to the 2 mitochondrial-processing peptidase (MPP) subunits beta-MPP and alpha-MPP respectively. The action of the protease is also necessary for the clearance of the UQCRFS1 fragments.

It is found in the mitochondrion inner membrane. The catalysed reaction is a quinol + 2 Fe(III)-[cytochrome c](out) = a quinone + 2 Fe(II)-[cytochrome c](out) + 2 H(+)(out). In terms of biological role, component of the ubiquinol-cytochrome c oxidoreductase, a multisubunit transmembrane complex that is part of the mitochondrial electron transport chain which drives oxidative phosphorylation. The respiratory chain contains 3 multisubunit complexes succinate dehydrogenase (complex II, CII), ubiquinol-cytochrome c oxidoreductase (cytochrome b-c1 complex, complex III, CIII) and cytochrome c oxidase (complex IV, CIV), that cooperate to transfer electrons derived from NADH and succinate to molecular oxygen, creating an electrochemical gradient over the inner membrane that drives transmembrane transport and the ATP synthase. The cytochrome b-c1 complex catalyzes electron transfer from ubiquinol to cytochrome c, linking this redox reaction to translocation of protons across the mitochondrial inner membrane, with protons being carried across the membrane as hydrogens on the quinol. In the process called Q cycle, 2 protons are consumed from the matrix, 4 protons are released into the intermembrane space and 2 electrons are passed to cytochrome c. The Rieske protein is a catalytic core subunit containing a [2Fe-2S] iron-sulfur cluster. It cycles between 2 conformational states during catalysis to transfer electrons from the quinol bound in the Q(0) site in cytochrome b to cytochrome c1. Incorporation of UQCRFS1 is the penultimate step in complex III assembly. Its function is as follows. Component of the ubiquinol-cytochrome c oxidoreductase (cytochrome b-c1 complex, complex III, CIII). UQCRFS1 undergoes proteolytic processing once it is incorporated in the complex III dimer. One of the fragments, called subunit 9, corresponds to its mitochondrial targeting sequence (MTS). The proteolytic processing is necessary for the correct insertion of UQCRFS1 in the complex III dimer, but the persistence of UQCRFS1-derived fragments may prevent newly imported UQCRFS1 to be processed and assembled into complex III and is detrimental for the complex III structure and function. The chain is Cytochrome b-c1 complex subunit Rieske, mitochondrial (UQCRFS1) from Colobus polykomos (Western black-and-white colobus monkey).